The primary structure comprises 142 residues: Small ribosomal subunit protein bS6 (142 aa).

Basic and acidic residues predominate over residues 110–133 (NKKPSHAKEKHEKTEHTHSHHAEE). A disordered region spans residues 110–142 (NKKPSHAKEKHEKTEHTHSHHAEEAESVGSHSE).

The protein belongs to the bacterial ribosomal protein bS6 family.

In terms of biological role, binds together with bS18 to 16S ribosomal RNA. The sequence is that of Small ribosomal subunit protein bS6 from Helicobacter pylori (strain P12).